A 95-amino-acid chain; its full sequence is Co-chaperonin GroES (95 aa).

This sequence belongs to the GroES chaperonin family. As to quaternary structure, heptamer of 7 subunits arranged in a ring. Interacts with the chaperonin GroEL.

Its subcellular location is the cytoplasm. In terms of biological role, together with the chaperonin GroEL, plays an essential role in assisting protein folding. The GroEL-GroES system forms a nano-cage that allows encapsulation of the non-native substrate proteins and provides a physical environment optimized to promote and accelerate protein folding. GroES binds to the apical surface of the GroEL ring, thereby capping the opening of the GroEL channel. The protein is Co-chaperonin GroES of Streptococcus salivarius.